The primary structure comprises 233 residues: Leucyl/phenylalanyl-tRNA--protein transferase (233 aa).

This sequence belongs to the L/F-transferase family.

The protein localises to the cytoplasm. The catalysed reaction is N-terminal L-lysyl-[protein] + L-leucyl-tRNA(Leu) = N-terminal L-leucyl-L-lysyl-[protein] + tRNA(Leu) + H(+). It carries out the reaction N-terminal L-arginyl-[protein] + L-leucyl-tRNA(Leu) = N-terminal L-leucyl-L-arginyl-[protein] + tRNA(Leu) + H(+). The enzyme catalyses L-phenylalanyl-tRNA(Phe) + an N-terminal L-alpha-aminoacyl-[protein] = an N-terminal L-phenylalanyl-L-alpha-aminoacyl-[protein] + tRNA(Phe). Functions in the N-end rule pathway of protein degradation where it conjugates Leu, Phe and, less efficiently, Met from aminoacyl-tRNAs to the N-termini of proteins containing an N-terminal arginine or lysine. The sequence is that of Leucyl/phenylalanyl-tRNA--protein transferase from Anaeromyxobacter dehalogenans (strain 2CP-1 / ATCC BAA-258).